The chain runs to 189 residues: MQLWVGLGNPGPKYAMHRHNVGFMAADVIAEIHDFPPPVKKFQGWLQDGRIGSTRILLLKPGTFMNESGRSVRAALDFYKLAATDVTVFYDELDLAPMKVKVKRGGGAAGHNGIRSMIQHIGDDFRRIRIGIGHPGHKDRVTGHVLGNYHKSEMEPLADLLGAIAAEAEWLAKGDDVRFQSDLALRLQG.

Tyr-14 contributes to the tRNA binding site. His-19 acts as the Proton acceptor in catalysis. TRNA contacts are provided by Phe-64, Asn-66, and Asn-112.

Belongs to the PTH family. Monomer.

The protein resides in the cytoplasm. It catalyses the reaction an N-acyl-L-alpha-aminoacyl-tRNA + H2O = an N-acyl-L-amino acid + a tRNA + H(+). Hydrolyzes ribosome-free peptidyl-tRNAs (with 1 or more amino acids incorporated), which drop off the ribosome during protein synthesis, or as a result of ribosome stalling. Functionally, catalyzes the release of premature peptidyl moieties from peptidyl-tRNA molecules trapped in stalled 50S ribosomal subunits, and thus maintains levels of free tRNAs and 50S ribosomes. The polypeptide is Peptidyl-tRNA hydrolase (Sphingopyxis alaskensis (strain DSM 13593 / LMG 18877 / RB2256) (Sphingomonas alaskensis)).